A 340-amino-acid chain; its full sequence is NADH-quinone oxidoreductase subunit H (340 aa).

The next 8 membrane-spanning stretches (helical) occupy residues 4–24 (TIGI…PLLI), 78–98 (YLFV…WAVI), 113–133 (VLYL…AGWA), 151–171 (VSYE…AGSM), 184–204 (MLHW…IAGI), 244–264 (SMIL…LSPF), 273–293 (IFFV…FLFV), and 316–336 (VLIP…VAHV).

This sequence belongs to the complex I subunit 1 family. In terms of assembly, NDH-1 is composed of 14 different subunits. Subunits NuoA, H, J, K, L, M, N constitute the membrane sector of the complex.

The protein localises to the cell inner membrane. It catalyses the reaction a quinone + NADH + 5 H(+)(in) = a quinol + NAD(+) + 4 H(+)(out). Functionally, NDH-1 shuttles electrons from NADH, via FMN and iron-sulfur (Fe-S) centers, to quinones in the respiratory chain. The immediate electron acceptor for the enzyme in this species is believed to be ubiquinone. Couples the redox reaction to proton translocation (for every two electrons transferred, four hydrogen ions are translocated across the cytoplasmic membrane), and thus conserves the redox energy in a proton gradient. This subunit may bind ubiquinone. This is NADH-quinone oxidoreductase subunit H from Legionella pneumophila (strain Corby).